Reading from the N-terminus, the 200-residue chain is GTP cyclohydrolase-2 (200 aa).

GTP is bound at residue 52–56 (RIHSE). 3 residues coordinate Zn(2+): C57, C68, and C70. Residues Q73, 94–96 (EGR), and T116 each bind GTP. D128 functions as the Proton acceptor in the catalytic mechanism. The active-site Nucleophile is the R130. 2 residues coordinate GTP: T151 and K156.

It belongs to the GTP cyclohydrolase II family. It depends on Zn(2+) as a cofactor.

It catalyses the reaction GTP + 4 H2O = 2,5-diamino-6-hydroxy-4-(5-phosphoribosylamino)-pyrimidine + formate + 2 phosphate + 3 H(+). The protein operates within cofactor biosynthesis; riboflavin biosynthesis; 5-amino-6-(D-ribitylamino)uracil from GTP: step 1/4. In terms of biological role, catalyzes the conversion of GTP to 2,5-diamino-6-ribosylamino-4(3H)-pyrimidinone 5'-phosphate (DARP), formate and pyrophosphate. The sequence is that of GTP cyclohydrolase-2 from Psychromonas ingrahamii (strain DSM 17664 / CCUG 51855 / 37).